The primary structure comprises 425 residues: Enolase (425 aa).

Glutamine 163 lines the (2R)-2-phosphoglycerate pocket. Residue glutamate 205 is the Proton donor of the active site. Positions 242, 285, and 312 each coordinate Mg(2+). Lysine 337, arginine 366, serine 367, and lysine 388 together coordinate (2R)-2-phosphoglycerate. The active-site Proton acceptor is the lysine 337.

The protein belongs to the enolase family. The cofactor is Mg(2+).

The protein resides in the cytoplasm. Its subcellular location is the secreted. It localises to the cell surface. It carries out the reaction (2R)-2-phosphoglycerate = phosphoenolpyruvate + H2O. It functions in the pathway carbohydrate degradation; glycolysis; pyruvate from D-glyceraldehyde 3-phosphate: step 4/5. Functionally, catalyzes the reversible conversion of 2-phosphoglycerate (2-PG) into phosphoenolpyruvate (PEP). It is essential for the degradation of carbohydrates via glycolysis. This chain is Enolase, found in Paracoccus denitrificans (strain Pd 1222).